We begin with the raw amino-acid sequence, 1133 residues long: Roquin-1 (1133 aa).

Zn(2+) is bound by residues cysteine 14, cysteine 17, cysteine 33, histidine 35, cysteine 38, cysteine 50, and aspartate 53. The segment at cysteine 14 to glutamine 54 adopts an RING-type; degenerate zinc-finger fold. The interval glycine 89–histidine 173 is HEPN-N. Residues glutamine 174 to threonine 326 are ROQ. The tract at residues proline 327–glutamine 396 is HEPN-C. The segment at lysine 413–glutamate 441 adopts a C3H1-type zinc-finger fold. 4 positions are modified to phosphoserine: serine 462, serine 531, serine 535, and serine 863. A disordered region spans residues threonine 505–serine 542. Disordered stretches follow at residues asparagine 1000–methionine 1019, asparagine 1058–aspartate 1078, and glutamine 1094–proline 1133. Pro residues predominate over residues glutamine 1007–tryptophan 1016. The span at asparagine 1058–proline 1070 shows a compositional bias: polar residues. The segment covering asparagine 1096 to serine 1110 has biased composition (low complexity). The residue at position 1110 (serine 1110) is a Phosphoserine. The segment covering asparagine 1119–proline 1133 has biased composition (polar residues).

Able to homodimerize. Interacts with DDX6 and EDC4. Interacts with CCR4-NOT deadenylase complex. Interacts with RC3H1; the interaction is RNA independent. Proteolytically cleaved after Arg-510 and Arg-579 by MALT1 in activated CD4(+) T cells; cleavage at Arg-510 and Arg-579 is critical for promoting RC3H1 degradation in response to T-cell receptor (TCR) stimulation, and hence is necessary for prolonging the stability of a set of mRNAs controlling Th17 cell differentiation. As to expression, widely expressed. Expressed at higher level in cerebellum, spleen, ovary and liver.

The protein localises to the cytoplasm. The protein resides in the P-body. Its subcellular location is the cytoplasmic granule. It carries out the reaction S-ubiquitinyl-[E2 ubiquitin-conjugating enzyme]-L-cysteine + [acceptor protein]-L-lysine = [E2 ubiquitin-conjugating enzyme]-L-cysteine + N(6)-ubiquitinyl-[acceptor protein]-L-lysine.. Its pathway is protein modification; protein ubiquitination. In terms of biological role, post-transcriptional repressor of mRNAs containing a conserved stem loop motif, called constitutive decay element (CDE), which is often located in the 3'-UTR, as in HMGXB3, ICOS, IER3, NFKBID, NFKBIZ, PPP1R10, TNF, TNFRSF4 and in many more mRNAs. Cleaves translationally inactive mRNAs harboring a stem-loop (SL), often located in their 3'-UTRs, during the early phase of inflammation in a helicase UPF1-independent manner. Binds to CDE and promotes mRNA deadenylation and degradation. This process does not involve miRNAs. In follicular helper T (Tfh) cells, represses of ICOS and TNFRSF4 expression, thus preventing spontaneous Tfh cell differentiation, germinal center B-cell differentiation in the absence of immunization and autoimmunity. In resting or LPS-stimulated macrophages, controls inflammation by suppressing TNF expression. Also recognizes CDE in its own mRNA and in that of paralogous RC3H2, possibly leading to feedback loop regulation. Recognizes and binds mRNAs containing a hexaloop stem-loop motif, called alternative decay element (ADE). Together with ZC3H12A, destabilizes TNFRSF4/OX40 mRNA by binding to the conserved stem loop structure in its 3'UTR. Able to interact with double-stranded RNA (dsRNA). miRNA-binding protein that regulates microRNA homeostasis. Enhances DICER-mediated processing of pre-MIR146a but reduces mature MIR146a levels through an increase of 3' end uridylation. Both inhibits ICOS mRNA expression and they may act together to exert the suppression. Acts as a ubiquitin E3 ligase. Pairs with E2 enzymes UBE2A, UBE2B, UBE2D2, UBE2F, UBE2G1, UBE2G2 and UBE2L3 and produces polyubiquitin chains. Shows the strongest activity when paired with UBE2N:UBE2V1 or UBE2N:UBE2V2 E2 complexes and generate both short and long polyubiquitin chains. This is Roquin-1 from Homo sapiens (Human).